Here is a 243-residue protein sequence, read N- to C-terminus: tRNA pseudouridine synthase A (243 aa).

The active-site Nucleophile is aspartate 54. A substrate-binding site is contributed by tyrosine 112.

This sequence belongs to the tRNA pseudouridine synthase TruA family. As to quaternary structure, homodimer.

It carries out the reaction uridine(38/39/40) in tRNA = pseudouridine(38/39/40) in tRNA. In terms of biological role, formation of pseudouridine at positions 38, 39 and 40 in the anticodon stem and loop of transfer RNAs. The polypeptide is tRNA pseudouridine synthase A (Aster yellows witches'-broom phytoplasma (strain AYWB)).